The chain runs to 59 residues: Photosystem II reaction center protein K (59 aa).

A propeptide spanning residues M1–A22 is cleaved from the precursor. Residues I30 to F50 form a helical membrane-spanning segment.

This sequence belongs to the PsbK family. In terms of assembly, PSII is composed of 1 copy each of membrane proteins PsbA, PsbB, PsbC, PsbD, PsbE, PsbF, PsbH, PsbI, PsbJ, PsbK, PsbL, PsbM, PsbT, PsbX, PsbY, PsbZ, Psb30/Ycf12, at least 3 peripheral proteins of the oxygen-evolving complex and a large number of cofactors. It forms dimeric complexes.

Its subcellular location is the plastid. The protein localises to the chloroplast thylakoid membrane. Its function is as follows. One of the components of the core complex of photosystem II (PSII). PSII is a light-driven water:plastoquinone oxidoreductase that uses light energy to abstract electrons from H(2)O, generating O(2) and a proton gradient subsequently used for ATP formation. It consists of a core antenna complex that captures photons, and an electron transfer chain that converts photonic excitation into a charge separation. The protein is Photosystem II reaction center protein K of Chara vulgaris (Common stonewort).